The sequence spans 485 residues: MNEAVTIRGKERYKSGVMEYKKMGYWEPDYEPKDTDVIALFRVTPQDGVDPIEAAAAVAGESSTATWTVVWTDRLTAAEKYRAKCYRVDPVPNSPGQYFAYIAYDLDLFEPGSISNLTASIIGNVFGFKPLKALRLEDMRLPIAYVKTFQGPATGIVVERERMDKFGRPLLGATVKPKLGLSGRNYGRVVYEALKGGLDFTKDDENINSQPFMHWRERFQYCMEAVNKAQAQTGEIKGTYLNVTAATMEDMYERAEYAKELGSIIVMIDLVIGYTAIQSMAKWARKNDMILHLHRAGHSTYTRQRNHGVSFRVIAKWMRLAGVDHIHAGTVVGKLEGDPATTKGYYDICREDFNPMTLENGLFFDQNWASLNKLMPVASGGIHAGQMHQLLHLLGEDVVLQFGGGTIGHPMGIAAGATANRVALEAMILARNEGRDYLHEGPEILAKAAQTCTPLKAALDTWKNVTFNYESTDTPDYAPTPSVSV.

Residues N124 and T174 each contribute to the substrate site. Catalysis depends on K176, which acts as the Proton acceptor. A substrate-binding site is contributed by K178. Residues K202, D204, and E205 each contribute to the Mg(2+) site. Residue K202 is modified to N6-carboxylysine. The Proton acceptor role is filled by H294. Substrate-binding residues include R295, H327, and S379.

Belongs to the RuBisCO large chain family. Type I subfamily. Heterohexadecamer of 8 large chains and 8 small chains. Mg(2+) is required as a cofactor.

The enzyme catalyses 2 (2R)-3-phosphoglycerate + 2 H(+) = D-ribulose 1,5-bisphosphate + CO2 + H2O. It carries out the reaction D-ribulose 1,5-bisphosphate + O2 = 2-phosphoglycolate + (2R)-3-phosphoglycerate + 2 H(+). RuBisCO catalyzes two reactions: the carboxylation of D-ribulose 1,5-bisphosphate, the primary event in carbon dioxide fixation, as well as the oxidative fragmentation of the pentose substrate. Both reactions occur simultaneously and in competition at the same active site. This chain is Ribulose bisphosphate carboxylase large chain, found in Rhodopseudomonas palustris (strain TIE-1).